The primary structure comprises 221 residues: Charged multivesicular body protein 3 (221 aa).

Glycine 2 is lipidated: N-myristoyl glycine. The stretch at 22–54 forms a coiled coil; the sequence is KIRKEMRVIDRQIRDIQREEEKVKRSIKDAAKK. Important for autoinhibitory function regions lie at residues 59–64 and 168–169; these read VCIILA and IL. Residues 144-221 are a coiled coil; it reads LEDTLEGMDD…MQSRLAALRS (78 aa). The tract at residues 181–221 is disordered; the sequence is PSKVTDLPDPVAIGATAAPEEESEEEEEIEEMQSRLAALRS. Acidic residues predominate over residues 199–211; it reads PEEESEEEEEIEE. An MIT-interacting motif motif is present at residues 200-210; that stretch reads EEESEEEEEIE. Interaction with STAMBP regions lie at residues 202–206 and 220–221; these read ESEEE and RS.

This sequence belongs to the SNF7 family. As to quaternary structure, probable core component of the endosomal sorting required for transport complex III (ESCRT-III). ESCRT-III components are thought to multimerize to form a flat lattice on the perimeter membrane of the endosome. Several assembly forms of ESCRT-III may exist that interact and act sequentially.

The protein localises to the cytoplasm. It is found in the cytosol. Its subcellular location is the membrane. The protein resides in the endosome. It localises to the late endosome membrane. In terms of biological role, probable core component of the endosomal sorting required for transport complex III (ESCRT-III) which is involved in multivesicular bodies (MVBs) formation and sorting of endosomal cargo proteins into MVBs. MVBs contain intraluminal vesicles (ILVs) that are generated by invagination and scission from the limiting membrane of the endosome and mostly are delivered to lysosomes enabling degradation of membrane proteins, such as stimulated growth factor receptors, lysosomal enzymes and lipids. Involved in late stages of cytokinesis. Plays a role in endosomal sorting/trafficking of EGF receptor. The chain is Charged multivesicular body protein 3 (chmp3) from Danio rerio (Zebrafish).